A 31-amino-acid chain; its full sequence is Cytochrome b6-f complex subunit 6 (31 aa).

Residues 4 to 24 (ITSYFGFLLAALTITSVLFIG) traverse the membrane as a helical segment.

It belongs to the PetL family. The 4 large subunits of the cytochrome b6-f complex are cytochrome b6, subunit IV (17 kDa polypeptide, PetD), cytochrome f and the Rieske protein, while the 4 small subunits are PetG, PetL, PetM and PetN. The complex functions as a dimer.

Its subcellular location is the plastid. The protein localises to the chloroplast thylakoid membrane. In terms of biological role, component of the cytochrome b6-f complex, which mediates electron transfer between photosystem II (PSII) and photosystem I (PSI), cyclic electron flow around PSI, and state transitions. PetL is important for photoautotrophic growth as well as for electron transfer efficiency and stability of the cytochrome b6-f complex. The sequence is that of Cytochrome b6-f complex subunit 6 from Nandina domestica (Heavenly bamboo).